Here is a 74-residue protein sequence, read N- to C-terminus: Guanine nucleotide-binding protein G(T) subunit gamma-T1 (74 aa).

Residue Cys-71 is modified to Cysteine methyl ester. A lipid anchor (S-farnesyl cysteine) is attached at Cys-71. The propeptide at 72-74 is removed in mature form; it reads VIS.

The protein belongs to the G protein gamma family. G proteins are composed of 3 units, alpha, beta and gamma. As to expression, retinal rod outer segment.

Its subcellular location is the cell membrane. In terms of biological role, guanine nucleotide-binding proteins (G proteins) are involved as a modulator or transducer in various transmembrane signaling systems. The beta and gamma chains are required for the GTPase activity, for replacement of GDP by GTP, and for G protein-effector interaction. This chain is Guanine nucleotide-binding protein G(T) subunit gamma-T1 (GNGT1), found in Canis lupus familiaris (Dog).